The sequence spans 118 residues: MATATSQSAPTQRIKMRLRKGDTVQVIAGKDKGKTGEVLRTLPNENRVIVEGVNMRTRHVKPTQEGESGRIVTEEASLHASNVMLYSTAKKVASRVELITEKDGSKKRRLKKTGEVID.

It belongs to the universal ribosomal protein uL24 family. In terms of assembly, part of the 50S ribosomal subunit.

In terms of biological role, one of two assembly initiator proteins, it binds directly to the 5'-end of the 23S rRNA, where it nucleates assembly of the 50S subunit. Its function is as follows. One of the proteins that surrounds the polypeptide exit tunnel on the outside of the subunit. This is Large ribosomal subunit protein uL24 from Synechococcus sp. (strain WH7803).